We begin with the raw amino-acid sequence, 2292 residues long: Protein Ycf2 (2292 aa).

1644-1651 (GSIGTGRS) is a binding site for ATP.

It belongs to the Ycf2 family.

The protein resides in the plastid. It is found in the chloroplast stroma. Functionally, probable ATPase of unknown function. Its presence in a non-photosynthetic plant (Epifagus virginiana) and experiments in tobacco indicate that it has an essential function which is probably not related to photosynthesis. The polypeptide is Protein Ycf2 (Morus indica (Mulberry)).